The primary structure comprises 161 residues: Dihydrofolate reductase type 1 from Tn4003 (161 aa).

In terms of domain architecture, DHFR spans 2 to 157; it reads TLSIIVAHDK…IPHTFLHLVR (156 aa). Position 6 to 8 (6 to 8) interacts with substrate; it reads IVA. Residues 7 to 8 and 15 to 20 each bind NADP(+); these read VA and IGYQNQ. Asp-28 lines the substrate pocket. 44–47 contributes to the NADP(+) binding site; that stretch reads ARKT. Arg-58 is a substrate binding site. NADP(+) is bound by residues 63-66 and 93-98; these read LTNQ and FGGQTL. Thr-112 contacts substrate.

The protein belongs to the dihydrofolate reductase family.

It carries out the reaction (6S)-5,6,7,8-tetrahydrofolate + NADP(+) = 7,8-dihydrofolate + NADPH + H(+). It participates in cofactor biosynthesis; tetrahydrofolate biosynthesis; 5,6,7,8-tetrahydrofolate from 7,8-dihydrofolate: step 1/1. Key enzyme in folate metabolism. Catalyzes an essential reaction for de novo glycine and purine synthesis, and for DNA precursor synthesis. This chain is Dihydrofolate reductase type 1 from Tn4003 (dfrA), found in Staphylococcus aureus.